The sequence spans 326 residues: ATP synthase gamma chain (326 aa).

The protein belongs to the ATPase gamma chain family. F-type ATPases have 2 components, CF(1) - the catalytic core - and CF(0) - the membrane proton channel. CF(1) has five subunits: alpha(3), beta(3), gamma(1), delta(1), epsilon(1). CF(0) has three main subunits: a, b and c.

The protein resides in the cell membrane. Produces ATP from ADP in the presence of a proton gradient across the membrane. The gamma chain is believed to be important in regulating ATPase activity and the flow of protons through the CF(0) complex. In Corynebacterium jeikeium (strain K411), this protein is ATP synthase gamma chain.